We begin with the raw amino-acid sequence, 164 residues long: Choriogonadotropin subunit beta (164 aa).

The signal sequence occupies residues 1-20 (MEMLQGLLLCLLLSTGGAWA). Cystine bridges form between C29–C77, C43–C92, C46–C130, C54–C108, C58–C110, and C113–C120. The N-linked (GlcNAc...) asparagine glycan is linked to N50. A disordered region spans residues 135–164 (FQDSSSKDPPRNLTSPSQLLEPADPPLVPQ). The O-linked (GalNAc...) serine glycan is linked to S140. An N-linked (GlcNAc...) asparagine glycan is attached at N146. O-linked (GalNAc...) serine glycosylation occurs at S151.

The protein belongs to the glycoprotein hormones subunit beta family. In terms of assembly, heterodimer of a common alpha chain and a unique beta chain which confers biological specificity to thyrotropin, lutropin, follitropin and gonadotropin. Placenta.

The protein localises to the secreted. Stimulates the ovaries to synthesize the steroids that are essential for the maintenance of pregnancy. This is Choriogonadotropin subunit beta (CGB) from Callithrix jacchus (White-tufted-ear marmoset).